Consider the following 592-residue polypeptide: Bifunctional purine biosynthesis protein ATIC (592 aa).

At Met-1 the chain carries N-acetylmethionine. The 145-residue stretch at 2–146 folds into the MGS-like domain; it reads APGQLALFSV…KNHARVTVVC (145 aa). The tract at residues 2-198 is IMP cyclohydrolase; the sequence is APGQLALFSV…ISDYFRKQYS (197 aa). Residues 12 to 14, 34 to 37, 64 to 67, 101 to 102, and 125 to 126 contribute to the IMP site; these read SDK, SGGT, RVKT, CN, and DI. Residue Lys-137 is the Proton donor/acceptor; for FAICAR cyclization activity of the active site. At Lys-199 the chain carries N6-acetyllysine. The AICAR formyltransferase stretch occupies residues 199–592; the sequence is KGVSQMPLRY…AHTNLRLFHH (394 aa). Residues 207-208, His-267, Gly-316, Asp-339, Asn-431, and Arg-451 contribute to the 5-amino-1-(5-phospho-beta-D-ribosyl)imidazole-4-carboxamide site; that span reads RY. The active-site Proton acceptor; for AICAR formyltransferase activity is the His-267. Ile-452 is a (6R)-10-formyltetrahydrofolate binding site. Phe-541 serves as a coordination point for 5-amino-1-(5-phospho-beta-D-ribosyl)imidazole-4-carboxamide. Residues Asp-546 and 565–566 each bind (6R)-10-formyltetrahydrofolate; that span reads SA. Arg-588 provides a ligand contact to 5-amino-1-(5-phospho-beta-D-ribosyl)imidazole-4-carboxamide.

This sequence belongs to the PurH family. As to quaternary structure, homodimer. Associates with internalized INSR complexes on Golgi/endosomal membranes. Interacts with INSR; ATIC together with PRKAA2/AMPK2 and HACD3/PTPLAD1 is proposed to be part of a signaling network regulating INSR autophosphorylation and endocytosis. As to expression, present in the heart, brain, placenta, lung, liver, skeletal muscle, kidney, pancreas.

It localises to the cytoplasm. It is found in the cytosol. It catalyses the reaction (6R)-10-formyltetrahydrofolate + 5-amino-1-(5-phospho-beta-D-ribosyl)imidazole-4-carboxamide = 5-formamido-1-(5-phospho-D-ribosyl)imidazole-4-carboxamide + (6S)-5,6,7,8-tetrahydrofolate. It carries out the reaction 10-formyldihydrofolate + 5-amino-1-(5-phospho-beta-D-ribosyl)imidazole-4-carboxamide = 5-formamido-1-(5-phospho-D-ribosyl)imidazole-4-carboxamide + 7,8-dihydrofolate. The catalysed reaction is IMP + H2O = 5-formamido-1-(5-phospho-D-ribosyl)imidazole-4-carboxamide. The enzyme catalyses 5-amino-1-(5-phospho-D-ribosyl)imidazole-4-thiocarboxamide + 10-formyldihydrofolate = 6-thio-IMP + 7,8-dihydrofolate + H2O. It functions in the pathway purine metabolism; IMP biosynthesis via de novo pathway; 5-formamido-1-(5-phospho-D-ribosyl)imidazole-4-carboxamide from 5-amino-1-(5-phospho-D-ribosyl)imidazole-4-carboxamide (10-formyl THF route): step 1/1. The protein operates within purine metabolism; IMP biosynthesis via de novo pathway; IMP from 5-formamido-1-(5-phospho-D-ribosyl)imidazole-4-carboxamide: step 1/1. AMP and XMP inhibit AICAR formyltransferase activity. AICAR formyltransferase activity is inhibited by N-(6-fluoro-1-oxo-1,2-dihydroisoquinolin-7-yl)-5- [(3R)-3-hydroxypyrrolidin-1-yl]thiophene-2-sulfonamide (LSN 3213128), which acts as a tumor suppression in cancer cell lines. Functionally, bifunctional enzyme that catalyzes the last two steps of purine biosynthesis. Acts as a transformylase that incorporates a formyl group to the AMP analog AICAR (5-amino-1-(5-phospho-beta-D-ribosyl)imidazole-4-carboxamide) to produce the intermediate formyl-AICAR (FAICAR). Can use both 10-formyldihydrofolate and 10-formyltetrahydrofolate as the formyl donor in this reaction. Also catalyzes the cyclization of FAICAR to inosine monophosphate (IMP). Is able to convert thio-AICAR to 6-mercaptopurine ribonucleotide, an inhibitor of purine biosynthesis used in the treatment of human leukemias. Promotes insulin receptor/INSR autophosphorylation and is involved in INSR internalization. In Homo sapiens (Human), this protein is Bifunctional purine biosynthesis protein ATIC.